The following is a 39-amino-acid chain: Photosystem II reaction center protein L (39 aa).

Residues 18–38 (SLYLGLLLVFVLGILFSSYFF) traverse the membrane as a helical segment.

This sequence belongs to the PsbL family. In terms of assembly, PSII is composed of 1 copy each of membrane proteins PsbA, PsbB, PsbC, PsbD, PsbE, PsbF, PsbH, PsbI, PsbJ, PsbK, PsbL, PsbM, PsbT, PsbX, PsbY, PsbZ, Psb30/Ycf12, peripheral proteins PsbO, CyanoQ (PsbQ), PsbU, PsbV and a large number of cofactors. It forms dimeric complexes.

The protein localises to the cellular thylakoid membrane. Functionally, one of the components of the core complex of photosystem II (PSII). PSII is a light-driven water:plastoquinone oxidoreductase that uses light energy to abstract electrons from H(2)O, generating O(2) and a proton gradient subsequently used for ATP formation. It consists of a core antenna complex that captures photons, and an electron transfer chain that converts photonic excitation into a charge separation. This subunit is found at the monomer-monomer interface and is required for correct PSII assembly and/or dimerization. The polypeptide is Photosystem II reaction center protein L (Trichormus variabilis (strain ATCC 29413 / PCC 7937) (Anabaena variabilis)).